We begin with the raw amino-acid sequence, 186 residues long: Probable peptidyl-tRNA hydrolase 2 (186 aa).

Belongs to the PTH2 family.

The enzyme catalyses an N-acyl-L-alpha-aminoacyl-tRNA + H2O = an N-acyl-L-amino acid + a tRNA + H(+). Its function is as follows. The natural substrate for this enzyme may be peptidyl-tRNAs which drop off the ribosome during protein synthesis. The protein is Probable peptidyl-tRNA hydrolase 2 of Drosophila melanogaster (Fruit fly).